We begin with the raw amino-acid sequence, 794 residues long: DNA ligase (794 aa).

NAD(+) is bound by residues 35-39 (DAEYD), 84-85 (SL), and Glu-126. The active-site N6-AMP-lysine intermediate is Lys-128. Positions 149, 186, 302, and 326 each coordinate NAD(+). The Zn(2+) site is built by Cys-420, Cys-423, Cys-450, and Cys-456. One can recognise a BRCT domain in the interval 711–794 (VEGLPLAGQT…KLFDEHGVAR (84 aa)).

This sequence belongs to the NAD-dependent DNA ligase family. LigA subfamily. It depends on Mg(2+) as a cofactor. The cofactor is Mn(2+).

It carries out the reaction NAD(+) + (deoxyribonucleotide)n-3'-hydroxyl + 5'-phospho-(deoxyribonucleotide)m = (deoxyribonucleotide)n+m + AMP + beta-nicotinamide D-nucleotide.. Its function is as follows. DNA ligase that catalyzes the formation of phosphodiester linkages between 5'-phosphoryl and 3'-hydroxyl groups in double-stranded DNA using NAD as a coenzyme and as the energy source for the reaction. It is essential for DNA replication and repair of damaged DNA. This is DNA ligase from Pseudomonas aeruginosa (strain LESB58).